The sequence spans 259 residues: Acetylglutamate kinase (259 aa).

Substrate contacts are provided by residues 45 to 46 (GG), arginine 67, and asparagine 159.

Belongs to the acetylglutamate kinase family. ArgB subfamily.

The protein localises to the cytoplasm. It catalyses the reaction N-acetyl-L-glutamate + ATP = N-acetyl-L-glutamyl 5-phosphate + ADP. Its pathway is amino-acid biosynthesis; L-arginine biosynthesis; N(2)-acetyl-L-ornithine from L-glutamate: step 2/4. Catalyzes the ATP-dependent phosphorylation of N-acetyl-L-glutamate. In Aeromonas salmonicida (strain A449), this protein is Acetylglutamate kinase.